Consider the following 76-residue polypeptide: Immune protein Tsi5 (76 aa).

The next 2 helical transmembrane spans lie at 19–39 (LLMTLVCIPLALLYVCLEWFF) and 43–63 (WVTVGVFFGVLVVLRLGLYLY).

It is found in the membrane. Functionally, immunity protein that plays a role in preventing early activation of toxin Tse5. The chain is Immune protein Tsi5 from Pseudomonas aeruginosa (strain ATCC 15692 / DSM 22644 / CIP 104116 / JCM 14847 / LMG 12228 / 1C / PRS 101 / PAO1).